A 243-amino-acid polypeptide reads, in one-letter code: Orotidine 5'-phosphate decarboxylase (243 aa).

Substrate contacts are provided by residues aspartate 18, lysine 39, 66-75, threonine 130, arginine 192, glutamine 201, glycine 221, and arginine 222; that span reads DLKFHDIPTT. The active-site Proton donor is lysine 68.

It belongs to the OMP decarboxylase family. Type 1 subfamily. In terms of assembly, homodimer.

The catalysed reaction is orotidine 5'-phosphate + H(+) = UMP + CO2. Its pathway is pyrimidine metabolism; UMP biosynthesis via de novo pathway; UMP from orotate: step 2/2. Catalyzes the decarboxylation of orotidine 5'-monophosphate (OMP) to uridine 5'-monophosphate (UMP). In Synechococcus sp. (strain CC9311), this protein is Orotidine 5'-phosphate decarboxylase.